Reading from the N-terminus, the 85-residue chain is UPF0291 protein SpyM3_1470 (85 aa).

The tract at residues 62 to 85 (TPEKLRQVQREKGLHGRSLDDPKS) is disordered.

It belongs to the UPF0291 family.

Its subcellular location is the cytoplasm. This chain is UPF0291 protein SpyM3_1470, found in Streptococcus pyogenes serotype M3 (strain ATCC BAA-595 / MGAS315).